Consider the following 159-residue polypeptide: MTELCPCGSGIDFADCCSPYLQNIKFAQTAESLMRSRYSAYVKHNADYLITSWHPDCQAEKWRLDIEQSFIVTQWLGLNVITTEKGENDNEAYVEFSACFLDQKSQDKQLIHERSRFLRIDQHWYYIDGVKPIDGIKPQIGRNSPCPCGSGKKYKKCCG.

This sequence belongs to the UPF0225 family.

This chain is UPF0225 protein plu2503, found in Photorhabdus laumondii subsp. laumondii (strain DSM 15139 / CIP 105565 / TT01) (Photorhabdus luminescens subsp. laumondii).